Consider the following 350-residue polypeptide: MIKVKSPGRVNLIGEHTDYTYGYVMPMAINLYTKIEAEKHGEVILYSEHFGEERKFSLNDLRKENSWIDYVKGIFWVLKESDYEVGGIKGRVSGNLPLGAGLSSSASFEVGILETLDKLYNLKLDSLSKVLLAKKAENEFVGVPCGILDQFAVVFGREGNVIFLDTHTLDYEYIPFPKDVSILVFYTGVRRELASSEYAERKHIAEESLKILGKGSSKEVREGELSKLPPLHRKFFGYIVRENARVLEVRDALKEGNVEEVGKILTTAHWDLAKNYEVSCKELDFFVERALKLGAYGARLTGAGFGGSAIALVDKEDAETIGEEILREYLKRFPWKARHFIVEPSDGVGI.

Residue 15–18 participates in substrate binding; it reads EHTD. ATP-binding positions include Ser47 and 99–105; that span reads GAGLSSS. Mg(2+) contacts are provided by Ser105 and Glu137. Asp149 acts as the Proton acceptor in catalysis. Tyr198 provides a ligand contact to substrate.

This sequence belongs to the GHMP kinase family. GalK subfamily.

It localises to the cytoplasm. It catalyses the reaction alpha-D-galactose + ATP = alpha-D-galactose 1-phosphate + ADP + H(+). Its pathway is carbohydrate metabolism; galactose metabolism. Catalyzes the transfer of the gamma-phosphate of ATP to D-galactose to form alpha-D-galactose-1-phosphate (Gal-1-P). The chain is Galactokinase from Pyrococcus horikoshii (strain ATCC 700860 / DSM 12428 / JCM 9974 / NBRC 100139 / OT-3).